The primary structure comprises 900 residues: Periodic tryptophan protein 2 (900 aa).

5 WD repeats span residues 10–47 (GAPY…SVTL), 50–89 (ETST…VLHR), 91–129 (TFKD…RAVL), 139–178 (NSDD…GVLN), and 185–229 (GHRD…VKMD). The interval 228–284 (MDESEDGHSEPPSPVTPDRADEVMVENGGGVGTELKKRKEYDGKGLESDEEGDDDDE) is disordered. The span at 261 to 274 (ELKKRKEYDGKGLE) shows a compositional bias: basic and acidic residues. Ser275 carries the post-translational modification Phosphoserine. A compositionally biased stretch (acidic residues) spans 275–284 (SDEEGDDDDE). WD repeat units lie at residues 302 to 341 (QASA…CIHL), 344 to 384 (ISRQ…YILK), 387 to 426 (GHYF…CFIT), 429 to 468 (EHTN…NYKT), 472 to 512 (PTPR…IKDI), 515 to 554 (GHEA…GTVE), 557 to 596 (RHNH…LMYT), and 619 to 658 (SSGK…LLRR). A disordered region spans residues 684–720 (PIDLIDDDNSDEEGGIDKQSRGNLGYDLPGSRPNRGR). Positions 687-697 (LIDDDNSDEEG) are enriched in acidic residues. The stretch at 720-759 (RPIIRTKSLSIAPTGRSFAAATTEGVLIFSIDDTFIFDPT) is one WD 14 repeat.

Belongs to the WD repeat PWP2 family. Component of the ribosomal small subunit (SSU) processome. Interacts with TBP1 in the nucleus. Expressed constitutively and ubiquitously; observed in seeds, seedlings, roots, leaves, stems, flowers and siliques.

It localises to the nucleus. The protein localises to the nucleolus. In terms of biological role, involved in nucleolar processing of pre-18S ribosomal RNA. Plays a role early in ribosome biogenesis, especially in the maturation of 5.8S rRNA. Required for guard cell functions. This is Periodic tryptophan protein 2 from Arabidopsis thaliana (Mouse-ear cress).